The chain runs to 213 residues: Nicolin-1 (213 aa).

Part of the neuronal tubulin polyglutamylase complex which contains TPGS1, TPGS2, TTLL1, LRRC49 and NICN1.

It localises to the nucleus. This chain is Nicolin-1 (NICN1), found in Canis lupus familiaris (Dog).